A 146-amino-acid chain; its full sequence is MKLHELKPAEGSRKVRNRVGRGTSSGNGKTSGRGQKGQKARSGGGVRLGFEGGQTPLFRRMPKRGFSNINAKEYALVNLDQLNVFEDGTEVTPVVLKEAGIVRAEKSGVKILGNGELTKKLSVKAAKFSKSAEAAITAKGGSIEVI.

A compositionally biased stretch (basic and acidic residues) spans 1–13 (MKLHELKPAEGSR). A disordered region spans residues 1–59 (MKLHELKPAEGSRKVRNRVGRGTSSGNGKTSGRGQKGQKARSGGGVRLGFEGGQTPLFR). Gly residues-rich tracts occupy residues 23–35 (TSSG…GRGQ) and 42–52 (SGGGVRLGFEG).

Belongs to the universal ribosomal protein uL15 family. Part of the 50S ribosomal subunit.

Its function is as follows. Binds to the 23S rRNA. This is Large ribosomal subunit protein uL15 from Streptococcus agalactiae serotype Ia (strain ATCC 27591 / A909 / CDC SS700).